We begin with the raw amino-acid sequence, 328 residues long: tRNA uridine(34) hydroxylase (328 aa).

The Rhodanese domain maps to 130 to 224 (LDEDTIVLDT…YGKDPEVQGE (95 aa)). Catalysis depends on Cys184, which acts as the Cysteine persulfide intermediate.

Belongs to the TrhO family.

It carries out the reaction uridine(34) in tRNA + AH2 + O2 = 5-hydroxyuridine(34) in tRNA + A + H2O. In terms of biological role, catalyzes oxygen-dependent 5-hydroxyuridine (ho5U) modification at position 34 in tRNAs. The polypeptide is tRNA uridine(34) hydroxylase (Streptococcus uberis (strain ATCC BAA-854 / 0140J)).